The chain runs to 349 residues: UPF0284 protein MM_0708 (349 aa).

It belongs to the UPF0284 family.

This is UPF0284 protein MM_0708 from Methanosarcina mazei (strain ATCC BAA-159 / DSM 3647 / Goe1 / Go1 / JCM 11833 / OCM 88) (Methanosarcina frisia).